Here is a 534-residue protein sequence, read N- to C-terminus: Peptide chain release factor 3 (534 aa).

Residues 9-278 enclose the tr-type G domain; the sequence is SRRRTFAIIS…FFVEHAPSPQ (270 aa). GTP contacts are provided by residues 18–25, 86–90, and 140–143; these read SHPDAGKT, DTPGH, and NKLD.

This sequence belongs to the TRAFAC class translation factor GTPase superfamily. Classic translation factor GTPase family. PrfC subfamily.

It localises to the cytoplasm. Increases the formation of ribosomal termination complexes and stimulates activities of RF-1 and RF-2. It binds guanine nucleotides and has strong preference for UGA stop codons. It may interact directly with the ribosome. The stimulation of RF-1 and RF-2 is significantly reduced by GTP and GDP, but not by GMP. This Stenotrophomonas maltophilia (strain K279a) protein is Peptide chain release factor 3.